The following is a 590-amino-acid chain: Aspartate--tRNA(Asp/Asn) ligase (590 aa).

Glutamate 175 serves as a coordination point for L-aspartate. Residues 199–202 (QQYK) are aspartate. L-aspartate-binding residues include arginine 221 and histidine 450. Residue 221 to 223 (RDE) coordinates ATP. Glutamate 484 provides a ligand contact to ATP. Arginine 491 serves as a coordination point for L-aspartate. ATP is bound at residue 536–539 (GVDR).

Belongs to the class-II aminoacyl-tRNA synthetase family. Type 1 subfamily. As to quaternary structure, homodimer.

The protein localises to the cytoplasm. It catalyses the reaction tRNA(Asx) + L-aspartate + ATP = L-aspartyl-tRNA(Asx) + AMP + diphosphate. In terms of biological role, aspartyl-tRNA synthetase with relaxed tRNA specificity since it is able to aspartylate not only its cognate tRNA(Asp) but also tRNA(Asn). Reaction proceeds in two steps: L-aspartate is first activated by ATP to form Asp-AMP and then transferred to the acceptor end of tRNA(Asp/Asn). The polypeptide is Aspartate--tRNA(Asp/Asn) ligase (Bradyrhizobium sp. (strain ORS 278)).